We begin with the raw amino-acid sequence, 106 residues long: MGEETINSTQNKTRTKTTRPKAVYLWTVSDVLKWYRRHCGEYTQYEQLFAQHDITGRALLRITDSSLQRMGVTDNRDREAIWREIVKQRLKTDIMEIRDMERLNIY.

The 66-residue stretch at 26–91 (WTVSDVLKWY…WREIVKQRLK (66 aa)) folds into the SAM domain.

As to quaternary structure, interacts with the SAM domain of cnk.

The protein resides in the cytoplasm. The protein localises to the membrane. In terms of biological role, required for normal photoreceptor differentiation between Ras and Raf for EGFR signaling in the eye and for mitogen-activated protein kinase phosphorylation. Probably acts together with Cnk to promote Raf activation, perhaps by recruiting an activating kinase. This chain is Protein aveugle (ave), found in Drosophila melanogaster (Fruit fly).